The chain runs to 202 residues: Recombination protein RecR (202 aa).

The segment at 61 to 76 (CARCNSFTEDDVCVIC) adopts a C4-type zinc-finger fold. Residues 84–179 (SLLCIVETPA…KVTRLARGVP (96 aa)) form the Toprim domain.

This sequence belongs to the RecR family.

May play a role in DNA repair. It seems to be involved in an RecBC-independent recombinational process of DNA repair. It may act with RecF and RecO. The chain is Recombination protein RecR from Bordetella avium (strain 197N).